The chain runs to 635 residues: MPIQILPPQLANQIAAGEVVERPASVVKELVENSLDAGATRIDIDIERGGAKLIRIRDNGCGISKDDLALALARHATSKISSLEDLEAILSMGFRGEALASISSVSRLILTSRTAEQSEAWQAYAEGRDMAVTIKPAAHPVGSTLEVLDLFYNTPARRKFMRTEKTEFGHIDEVVRRIALARFDVAINLNHNGKLIRQYRAAPDPAQHERRLASICGPAFLQHALAIAWQHGDLNIHGWVADPAASHTLSEMQYCYVNNRMMRDRLINHAIRQAYQDRLNDAQQPAYVLYLDIDPHQVDVNVHPAKHEVRFHQARLVHDFIYQAVTAVLQQTNAPILNISEEGEVDAPRWQQENRVAAGTNKYAQPEAAKSSAAEQAVARERSSARERAAPAYKEDHPYQKQQGELYRQLLQPSAAAKPATSPAAIPASSVSSPSIPVQRITQAEEPLHGDNYSFGRVLTVFPPCYALIEYQGGVALLSLAVAERWLKQAQLSPPEEGLRPQPLLIPLKITLDKNEIAACQNHEKLLITMGIELSVEQGRATLRAVSLPLRQQNLQKLIPELLGYLSQHEEISPDTLATWLARHLGSEHEVWNVSQAIQLLTEVERLCPQLVQSPPAGLLQPIDIKAALATLTHE.

The disordered stretch occupies residues 359–399 (GTNKYAQPEAAKSSAAEQAVARERSSARERAAPAYKEDHPY). Residues 364 to 377 (AQPEAAKSSAAEQA) are compositionally biased toward low complexity. A compositionally biased stretch (basic and acidic residues) spans 378-399 (VARERSSARERAAPAYKEDHPY).

The protein belongs to the DNA mismatch repair MutL/HexB family.

Functionally, this protein is involved in the repair of mismatches in DNA. It is required for dam-dependent methyl-directed DNA mismatch repair. May act as a 'molecular matchmaker', a protein that promotes the formation of a stable complex between two or more DNA-binding proteins in an ATP-dependent manner without itself being part of a final effector complex. This Yersinia pestis bv. Antiqua (strain Antiqua) protein is DNA mismatch repair protein MutL.